The primary structure comprises 127 residues: Major sperm protein 77/79 (127 aa).

At Ala-2 the chain carries N-acetylalanine. Positions 9-126 (DIQTQPGTKI…RRKNLPIEYN (118 aa)) constitute an MSP domain.

As to expression, sperm.

Its subcellular location is the cell projection. The protein resides in the pseudopodium. It is found in the cytoplasm. It localises to the cytoskeleton. Central component in molecular interactions underlying sperm crawling. Forms an extensive filament system that extends from sperm villipoda, along the leading edge of the pseudopod. This is Major sperm protein 77/79 (msp-77) from Caenorhabditis elegans.